A 289-amino-acid polypeptide reads, in one-letter code: MAKWLGAPLARGVSTATRAKDSDRQDACRILDDALRDGELSMEEHRERVSAATKAVTLGDLQRLVADLQVESAPAQMPALKSRAKRTELGLLAAAFVASVLLGVGIGWGVYGNTRSPLDFTSDPGAKPDGIAPVVLTPPRQLHSLGGLTGLLEQTRKRFGDTMGYRLVIYPEYASLDRVDPADDRRVLAYTYRGGWGDATSSAKSIADVSVVDLSKFDAKTAVGIMRGAPETLGLKQSDVKSMYLIVEPVKDPTTPAALSLSLYVSSDYGGGYLVFAGDGTIKHVSYPS.

The N-terminal stretch at 1 to 19 is a signal peptide; sequence MAKWLGAPLARGVSTATRA. The next 2 membrane-spanning stretches (helical) occupy residues 90–110 and 257–277; these read GLLA…GWGV and AALS…LVFA.

The protein localises to the cell membrane. This is an uncharacterized protein from Mycobacterium tuberculosis (strain ATCC 25618 / H37Rv).